The following is a 300-amino-acid chain: Probable mitochondrial 2-oxodicarboxylate carrier (300 aa).

The interval 1–20 (MTSKGNAGNPPTPTPAPVKS) is disordered. Solcar repeat units follow at residues 21-104 (QPLW…YEKQ), 114-200 (PTQM…IKSA), and 209-295 (GVLV…VMKL). 6 consecutive transmembrane segments (helical) span residues 27–47 (LVSG…LDVV), 74–93 (LKMY…KRAI), 120–140 (IGSG…FELV), 171–191 (GFFK…GGYF), 209–229 (GVLV…TMLN), and 278–298 (LGPG…LLAG).

This sequence belongs to the mitochondrial carrier (TC 2.A.29) family.

The protein localises to the mitochondrion inner membrane. The catalysed reaction is 2-oxoadipate(in) + 2-oxoglutarate(out) = 2-oxoadipate(out) + 2-oxoglutarate(in). The enzyme catalyses hexanedioate(in) + 2-oxoglutarate(out) = hexanedioate(out) + 2-oxoglutarate(in). It catalyses the reaction L-2-aminoadipate(in) + 2-oxoglutarate(out) = L-2-aminoadipate(out) + 2-oxoglutarate(in). It carries out the reaction glutarate(in) + 2-oxoglutarate(out) = glutarate(out) + 2-oxoglutarate(in). The catalysed reaction is 2-oxoheptanedioate(in) + 2-oxoglutarate(out) = 2-oxoheptanedioate(out) + 2-oxoglutarate(in). The enzyme catalyses heptanedioate(in) + 2-oxoglutarate(out) = heptanedioate(out) + 2-oxoglutarate(in). It catalyses the reaction citrate(in) + 2-oxoglutarate(out) = citrate(out) + 2-oxoglutarate(in). Functionally, transports dicarboxylates across the inner membranes of mitochondria by a counter-exchange mechanism. Can transport 2-oxoadipate (2-oxohexanedioate), 2-oxoglutarate, adipate (hexanedioate), glutarate, and to a lesser extent, pimelate (heptanedioate), 2-oxopimelate (2-oxoheptanedioate), 2-aminoadipate (2-aminohexanedioate), oxaloacetate, and citrate. Plays a central role in catabolism of lysine, hydroxylysine, and tryptophan, by transporting common metabolite intermediates (such as 2-oxoadipate) into the mitochondria, where it is converted into acetyl-CoA and can enter the citric acid (TCA) cycle. This Dictyostelium discoideum (Social amoeba) protein is Probable mitochondrial 2-oxodicarboxylate carrier (mcfT).